Consider the following 568-residue polypeptide: Sulfite reductase [NADPH] hemoprotein beta-component (568 aa).

C426, C432, C471, and C475 together coordinate [4Fe-4S] cluster. Position 475 (C475) interacts with siroheme.

The protein belongs to the nitrite and sulfite reductase 4Fe-4S domain family. As to quaternary structure, alpha(8)-beta(8). The alpha component is a flavoprotein, the beta component is a hemoprotein. The cofactor is siroheme. Requires [4Fe-4S] cluster as cofactor.

The catalysed reaction is hydrogen sulfide + 3 NADP(+) + 3 H2O = sulfite + 3 NADPH + 4 H(+). It functions in the pathway sulfur metabolism; hydrogen sulfide biosynthesis; hydrogen sulfide from sulfite (NADPH route): step 1/1. Component of the sulfite reductase complex that catalyzes the 6-electron reduction of sulfite to sulfide. This is one of several activities required for the biosynthesis of L-cysteine from sulfate. This Xylella fastidiosa (strain M12) protein is Sulfite reductase [NADPH] hemoprotein beta-component.